Consider the following 1679-residue polypeptide: GRIP and coiled-coil domain-containing protein 2 (1679 aa).

The residue at position 1 (methionine 1) is an N-acetylmethionine. Disordered stretches follow at residues 1 to 23 (MEDS…KLET) and 1466 to 1522 (LKSE…SAGT). Positions 35-1469 (KQMMLLQKAK…ETQLFQLKSE (1435 aa)) form a coiled coil. A phosphoserine mark is found at serine 1474 and serine 1478. A compositionally biased stretch (polar residues) spans 1474-1483 (SPASSHQPSK). The segment at 1569–1608 (HLNGLLRETEATNAILMEQIKLLKSEIRRLERNQEREKSV) is mediates interaction with RAB6A. Residues 1569-1679 (HLNGLLRETE…SYLHSWSGLR (111 aa)) form a mediates interaction with RAB9A region. Residues 1604–1654 (REKSVANLEYLKNVLLRFIFLKPGSERERLLPVIDTMLQLSPEEKGKLATV) enclose the GRIP domain.

Homodimer. Interacts (via GRIP domain) with RAB6A (preferentially in its GTP-bound form). May interact (RAB6A-dependent) with ARL1; might be involved in GCC2 Golgi localization. Interacts with CLASP1 and CLASP2; recruits both proteins to membranes of the TGN. Interacts with STX16. Interacts (probably via GRIP domain) with RAB9A (preferentially in its GTP-bound form).

Its subcellular location is the cytoplasm. It is found in the golgi apparatus. It localises to the trans-Golgi network membrane. Its function is as follows. Golgin which probably tethers transport vesicles to the trans-Golgi network (TGN) and regulates vesicular transport between the endosomes and the Golgi. As a RAB9A effector it is involved in recycling of the mannose 6-phosphate receptor from the late endosomes to the TGN. May also play a role in transport between the recycling endosomes and the Golgi. Required for maintenance of the Golgi structure, it is involved in the biogenesis of noncentrosomal, Golgi-associated microtubules through recruitment of CLASP1 and CLASP2. The polypeptide is GRIP and coiled-coil domain-containing protein 2 (Gcc2) (Rattus norvegicus (Rat)).